Consider the following 93-residue polypeptide: MAALLNDAEIEERLGDLTGWTRQGNEIRKTFQLPSFPSAIAFVVNVAFLAEAAGHHPDIDIRWRKVTLSLSTHDAGGLTGKDFDLAAQIDEII.

Belongs to the pterin-4-alpha-carbinolamine dehydratase family.

The enzyme catalyses (4aS,6R)-4a-hydroxy-L-erythro-5,6,7,8-tetrahydrobiopterin = (6R)-L-erythro-6,7-dihydrobiopterin + H2O. In Roseiflexus castenholzii (strain DSM 13941 / HLO8), this protein is Putative pterin-4-alpha-carbinolamine dehydratase.